The sequence spans 164 residues: Phosphopantetheine adenylyltransferase (164 aa).

Threonine 10 provides a ligand contact to substrate. Residues 10–11 (TF) and histidine 18 contribute to the ATP site. Lysine 42, threonine 79, and arginine 93 together coordinate substrate. ATP is bound by residues 94–96 (GLR), glutamate 104, and 129–135 (NQIISSR).

Belongs to the bacterial CoaD family. In terms of assembly, homohexamer. Requires Mg(2+) as cofactor.

It localises to the cytoplasm. The enzyme catalyses (R)-4'-phosphopantetheine + ATP + H(+) = 3'-dephospho-CoA + diphosphate. It functions in the pathway cofactor biosynthesis; coenzyme A biosynthesis; CoA from (R)-pantothenate: step 4/5. Its function is as follows. Reversibly transfers an adenylyl group from ATP to 4'-phosphopantetheine, yielding dephospho-CoA (dPCoA) and pyrophosphate. The polypeptide is Phosphopantetheine adenylyltransferase (Pelagibacter ubique (strain HTCC1062)).